A 185-amino-acid polypeptide reads, in one-letter code: MLLFFVILGIFVLTILKAISKQRWSWLLLAASALSLELSALYFQHVMQLEPCVMCVYERLAMLGILLAGLIGASSPNNVFIRLSAFLLWGISAVWGILLAIKHTDYQLHPSPFFTCDFFPNFPAWAPLHEWLPWLFNPTGDCSDIVWQFLGYSMPQWLIVSFSLYTLLFIIFAISAVLKTKKQLF.

Residues 1–25 are Cytoplasmic-facing; sequence MLLFFVILGIFVLTILKAISKQRWS. The chain crosses the membrane as a helical span at residues 26–42; sequence WLLLAASALSLELSALY. The Periplasmic segment spans residues 43-60; that stretch reads FQHVMQLEPCVMCVYERL. A disulfide bridge links Cys-52 with Cys-55. A helical membrane pass occupies residues 61–76; the sequence is AMLGILLAGLIGASSP. Residues 77-83 lie on the Cytoplasmic side of the membrane; sequence NNVFIRL. A helical transmembrane segment spans residues 84 to 101; the sequence is SAFLLWGISAVWGILLAI. Over 102–156 the chain is Periplasmic; that stretch reads KHTDYQLHPSPFFTCDFFPNFPAWAPLHEWLPWLFNPTGDCSDIVWQFLGYSMPQ. Cys-116 and Cys-142 are joined by a disulfide. Residues 157 to 175 form a helical membrane-spanning segment; that stretch reads WLIVSFSLYTLLFIIFAIS. Residues 176–185 are Cytoplasmic-facing; sequence AVLKTKKQLF.

It belongs to the DsbB family.

It is found in the cell inner membrane. Functionally, required for disulfide bond formation in some periplasmic proteins. Acts by oxidizing the DsbA protein. This is Disulfide bond formation protein B from Psychromonas ingrahamii (strain DSM 17664 / CCUG 51855 / 37).